The following is a 551-amino-acid chain: Protein GPR107 (551 aa).

The N-terminal stretch at 1 to 33 (MAVRVPLGCTGSFCPRLLPLLALLELLVDPSLG) is a signal peptide. The Extracellular portion of the chain corresponds to 34-262 (RVHHLALKDD…YLSAGEIPLP (229 aa)). Asn-64 carries an N-linked (GlcNAc...) asparagine glycan. Positions 127–183 (GVKVRSPPEAGKQLPEIVFSKDEKVPSRSQEPAVSSNPKDSKVQRTPDGSKAQRSTV) are disordered. Residues 153 to 164 (SRSQEPAVSSNP) are compositionally biased toward polar residues. Asn-209 is a glycosylation site (N-linked (GlcNAc...) asparagine). A helical membrane pass occupies residues 263–283 (KLYVSMALLFFLSGTVWIHIL). At 284 to 292 (RKRRNDVFK) the chain is on the cytoplasmic side. A helical membrane pass occupies residues 293–313 (IHWLMAALPFTKSLSLVFHAI). Topologically, residues 314-336 (DYHYISSQGFPIEGWAVVYYITH) are extracellular. Residues 337–357 (LLKGALLFITIALIGTGWAFI) form a helical membrane-spanning segment. The Cytoplasmic portion of the chain corresponds to 358 to 367 (KHILSDKDKK). The chain crosses the membrane as a helical span at residues 368-388 (IFMIVIPLQVLANVAYIIIES). Topologically, residues 389 to 401 (TEEGTTEYGLWKD) are extracellular. A helical membrane pass occupies residues 402–422 (SLFLVDLLCCGAILFPVVWSI). The Cytoplasmic portion of the chain corresponds to 423-443 (RHLQEASATDGKAAINLAKLK). A helical transmembrane segment spans residues 444 to 466 (LFRHYYVLIVCYIYFTRIIAFLL). Residues 467 to 475 (KFAVPFQWK) are Extracellular-facing. A helical membrane pass occupies residues 476-495 (WLYQLLDETATLVFFVLTGY). Over 496 to 551 (KFRPASDNPYLQLSQEEDDLEMESVVTTSGVMENMKKVKKVSNGAVEPQGSWEGTA) the chain is Cytoplasmic.

The protein belongs to the LU7TM family. In terms of processing, cleaved by FURIN to yield two fragments that remain associated via a disulfide bond. As to expression, widely expressed. Not detected in the duodenum, nor in the exocrine pancreas.

It is found in the cell membrane. It localises to the golgi apparatus. The protein resides in the trans-Golgi network membrane. Functionally, has been proposed to act as a receptor for neuronostatin, a peptide derived from the somatostatin/SST precursor. Involved in blood sugar regulation through the induction of glucagon in response to low glucose. This Rattus norvegicus (Rat) protein is Protein GPR107 (Gpr107).